The following is an 80-amino-acid chain: U-actitoxin-Avd9b (80 aa).

Residues 1-20 (MNLKVLAVFVLCAILVVVTA) form the signal peptide. The propeptide occupies 21-39 (ERRGTETGGYKKDTLQDLK). A ShKT domain is found at 45-80 (CFDRYREAACTSDNIRLLCKTSAKYQINCKKSCGLC). 3 disulfide bridges follow: cysteine 45-cysteine 80, cysteine 54-cysteine 73, and cysteine 63-cysteine 77. Residues 68-69 (KY) are crucial for binding to potassium channels.

This sequence belongs to the sea anemone type 1 potassium channel toxin family. Type 1b subfamily.

The protein resides in the secreted. The protein localises to the nematocyst. Functionally, inhibits voltage-gated potassium channels (Kv1/KCNA). In Anemonia viridis (Snakelocks anemone), this protein is U-actitoxin-Avd9b.